We begin with the raw amino-acid sequence, 229 residues long: Non-structural protein P8 (229 aa).

2 consecutive transmembrane segments (helical) span residues 119–139 and 162–182; these read IIHMTLLIAAVVALLTSVCTL and SLNPMLGVVNVGATFLMMVCA.

The protein belongs to the orbivirus NS3 family. As to quaternary structure, forms homooligomers via coiled-coil motif. Interacts with host OPTN; this interaction inhibits innate immune response.

The protein resides in the host cell membrane. Its subcellular location is the host Golgi apparatus. Functionally, plays a role in the inhibition of host innate immune response. Interacts with host OPTN and thus inhibits the recruitment of TBK1 to the host Golgi apparatus. In turn, downstream partner IRF3 cannot be activated and IFN-beta production is impaired. Its function is as follows. Facilitates viral particle release either by increasing plasma membrane permeability through a viroporin-like activity or by viral budding. This chain is Non-structural protein P8 (Segment-10), found in Antilocapra americana (Pronghorn).